A 209-amino-acid chain; its full sequence is Ribosomal RNA small subunit methyltransferase G (209 aa).

Residues Gly72, Leu77, Ala123 to Glu124, and Arg138 each bind S-adenosyl-L-methionine.

The protein belongs to the methyltransferase superfamily. RNA methyltransferase RsmG family.

It localises to the cytoplasm. Functionally, specifically methylates the N7 position of guanine in position 518 of 16S rRNA. This is Ribosomal RNA small subunit methyltransferase G from Leifsonia xyli subsp. xyli (strain CTCB07).